Reading from the N-terminus, the 446-residue chain is Tubulin alpha-1B chain (446 aa).

Gln11 is a binding site for GTP. The segment at 34-55 (GRLMDDSPSKHDSGSTFFSETG) is disordered. Basic and acidic residues predominate over residues 35 to 46 (RLMDDSPSKHDS). GTP contacts are provided by Glu69, Ser138, Gly142, Thr143, Ser177, Asn204, and Asn226. Residue Glu69 coordinates Mg(2+). Residue Glu252 is part of the active site.

This sequence belongs to the tubulin family. Dimer of alpha and beta chains. A typical microtubule is a hollow water-filled tube with an outer diameter of 25 nm and an inner diameter of 15 nM. Alpha-beta heterodimers associate head-to-tail to form protofilaments running lengthwise along the microtubule wall with the beta-tubulin subunit facing the microtubule plus end conferring a structural polarity. Microtubules usually have 13 protofilaments but different protofilament numbers can be found in some organisms and specialized cells. It depends on Mg(2+) as a cofactor.

Its subcellular location is the cytoplasm. The protein resides in the cytoskeleton. The enzyme catalyses GTP + H2O = GDP + phosphate + H(+). Its function is as follows. Tubulin is the major constituent of microtubules, a cylinder consisting of laterally associated linear protofilaments composed of alpha- and beta-tubulin heterodimers. Microtubules grow by the addition of GTP-tubulin dimers to the microtubule end, where a stabilizing cap forms. Below the cap, tubulin dimers are in GDP-bound state, owing to GTPase activity of alpha-tubulin. The protein is Tubulin alpha-1B chain (TUB-1B) of Schizophyllum commune (Split gill fungus).